The primary structure comprises 732 residues: Protein kinase YpkA (732 aa).

One can recognise a Protein kinase domain in the interval 136-408; the sequence is VAETDKFAEG…SNEARLHEFL (273 aa). ATP contacts are provided by residues 142–150 and K163; that span reads FAEGESHIS. The Proton acceptor role is filled by D270.

The protein belongs to the protein kinase superfamily. Ser/Thr protein kinase family.

Its subcellular location is the secreted. It catalyses the reaction L-seryl-[protein] + ATP = O-phospho-L-seryl-[protein] + ADP + H(+). The catalysed reaction is L-threonyl-[protein] + ATP = O-phospho-L-threonyl-[protein] + ADP + H(+). Functionally, acts as a virulence determinant. The protein is Protein kinase YpkA (ypkA) of Yersinia pestis.